The primary structure comprises 303 residues: UDP-3-O-acyl-N-acetylglucosamine deacetylase (303 aa).

Zn(2+)-binding residues include H78, H237, and D241. H264 functions as the Proton donor in the catalytic mechanism.

It belongs to the LpxC family. Zn(2+) is required as a cofactor.

It carries out the reaction a UDP-3-O-[(3R)-3-hydroxyacyl]-N-acetyl-alpha-D-glucosamine + H2O = a UDP-3-O-[(3R)-3-hydroxyacyl]-alpha-D-glucosamine + acetate. It participates in glycolipid biosynthesis; lipid IV(A) biosynthesis; lipid IV(A) from (3R)-3-hydroxytetradecanoyl-[acyl-carrier-protein] and UDP-N-acetyl-alpha-D-glucosamine: step 2/6. In terms of biological role, catalyzes the hydrolysis of UDP-3-O-myristoyl-N-acetylglucosamine to form UDP-3-O-myristoylglucosamine and acetate, the committed step in lipid A biosynthesis. This chain is UDP-3-O-acyl-N-acetylglucosamine deacetylase, found in Saccharophagus degradans (strain 2-40 / ATCC 43961 / DSM 17024).